The sequence spans 510 residues: ATP synthase subunit alpha (510 aa).

An ATP-binding site is contributed by 169–176 (GDRQTGKT).

This sequence belongs to the ATPase alpha/beta chains family. F-type ATPases have 2 components, CF(1) - the catalytic core - and CF(0) - the membrane proton channel. CF(1) has five subunits: alpha(3), beta(3), gamma(1), delta(1), epsilon(1). CF(0) has four main subunits: a(1), b(1), b'(1) and c(9-12).

Its subcellular location is the cell inner membrane. It carries out the reaction ATP + H2O + 4 H(+)(in) = ADP + phosphate + 5 H(+)(out). Produces ATP from ADP in the presence of a proton gradient across the membrane. The alpha chain is a regulatory subunit. This Rhodopseudomonas palustris (strain ATCC BAA-98 / CGA009) protein is ATP synthase subunit alpha.